Reading from the N-terminus, the 437-residue chain is MDRISNLPDGVIYRVISLLSTKEATCLKYTSKNWLNLVTIIPIAVFVDSSASAISASFKDFADRIMLARLASHRIRRFSLKLQSLNFAQYKTVNDCLRNVLECGVLDLELDINVRGDYSLPSEIFTCKSVVKMKLGSGFVIDILPKNAWLPALKTLLLDTVRFEFDNTAGCSFTKLISACPVLEELVIDGHNCEDWKWSRRVSSQILKRLTIRRKEWVHDGSSFEPISLDIPSLEYFKYFDTLRDSYPVVKLNSLVEAKLELPSLYIGDTYNVRNLIKGLKNVQILRLGAVDTMHLFWVFREAVPVFENLFHLSVSTHDAICWDDLRILLEKSPNLKTLTIEALHYHGYGDENSVCECLDGYSFLLSCPIEILKITEFGGEIEEMEQVEYVLENLLCLVLLEIHVKTKKIDRKLQILADLLMLPRASSKCKVQVKFV.

One can recognise an F-box domain in the interval 1 to 49 (MDRISNLPDGVIYRVISLLSTKEATCLKYTSKNWLNLVTIIPIAVFVDS).

The chain is F-box protein At3g62430 from Arabidopsis thaliana (Mouse-ear cress).